Here is a 445-residue protein sequence, read N- to C-terminus: RNA-binding protein asd-2 (445 aa).

A disordered region spans residues 22 to 63 (TVIPPPPNDSGHEFIGPSSGPPQVTITPSGVQSGSANGVSTS). A compositionally biased stretch (polar residues) spans 42–63 (PPQVTITPSGVQSGSANGVSTS). Positions 71-128 (EYLSQLLKDKKQLAAFPNVFHHLERLADEEINKVRVVLFQCEFSKESAPLPDAEGDST) are qua1 domain. In terms of domain architecture, KH spans 145–171 (NFVGRILGPRGMTAKQLEQETGCKIMV). Residues 230–253 (APEGEDDLKRKQLMELAIINGTYR) are qua2 domain; involved in RNA binding.

In terms of assembly, interacts with sup-12; in the presence of RNA, but with weak affinity in the absence of RNA. Isoform b: Expressed in the hypodermis and pharyngeal muscles. Isoform c: Expressed in body wall muscles and phayngeal muscles.

The protein resides in the nucleus. Functionally, RNA-binding protein that binds to the 5'-NACUAAY-N(1,20)-UAAY-3' consensus sequence in pre-mRNA introns to promote alternative splicing. Required for mutually exclusive alternative splicing where it modulates the switch between mutually exclusive exons during pre-mRNA maturation. Involved in muscle-specific gene expression regulating the alternative splicing of genes such as let-2 and unc-60 to ensure that their respective isoforms are expressed in muscle. Promotes the removal of intron 10 from let-2 pre-mRNA to allow for the exclusive expression of the muscle-specific let-2 isoform (as opposed to the non-muscle-specific isoform expressed in embryos) in body wall muscles during late larval and adult stages of development. Binds cooperatively with RNA-binding protein sup-12 to intron 1A of the unc-60 pre-mRNA to promote alternative splicing and expression of the muscle specific isoform of unc-60. This chain is RNA-binding protein asd-2, found in Caenorhabditis elegans.